Reading from the N-terminus, the 909-residue chain is MQKCAGHAPLVTAASRVSQDTVDALLQAILKAYHKLASIDSHINDPVEIAFKLINSFKYLPISGSSVKDFESELRELDVFSPLLQSAVTAANNSNIIWDLIAVLFAYISIHKQLHPLILHNLNIWKDFMADNDEETATTTDGDSMNFGVLSLLSIVQNFEEITPNLFEFLKLGLRSTLLKIWVAQWQRYDPSATNLINGDEKISSWITKDYQVDFFIITSLASTSSLEVLPSHYFVYKISKRISHFPNLIDPKLYRSAISTIMENGISDNGGGENSSDKIDPTDLSFHLQVLMEVIDHPELNYLQENRLILLLDIALNYLILVPTHCLHSNFGELGSTQSLASTLNIIQFLLSKFLINMGSISQLINQYNRKCITTNNINNNNINNNGVINGSTNTTSTTTTTITNNNNNSNNSSISNNNRKIDWTQSYQTRYQIPYWFEDSILPPIPPISKSLFTFDKNLDHESDSIMIVNDVLRCLNLTILLISKLLRDYDDLKINPLIQSSDDHSNEDNHVIIEQYMQLYLVPLFTSLLLAQQLKDRGQERDEGHKEKEENINLIGSSSVKKLFSQLIFFSSLKLCENLVIKEKNLALYHLIKFATKVSLDDLILQKISINLLNHLFFHQIRDGSDDDNLIKKLCLKNQLSFQALKDYITLWNDGSEVYNAFYKELFYEEQPKIKPIKLTTSDLLKLFPEDVQFVISTPPNTITSASTSDNCTSSQSAAQKNIENFTTLSKYDVYSSTSFIPSTSKNTNTNVSKQQQQPQNSTPCSSNRFLFNKSSLISQESNGSNNNSGTQGPGSMNESYSLDNSFNTTNTNMTRQPTTLTRATDAMTTAPTTPIPYKNTSGSSNNNLWIESPMTNFKGSTISKSTNKSKMVNTGKNYILGGHNKVKNNSRAQSIHIDDFENENN.

A compositionally biased stretch (polar residues) spans 746 to 784 (STSKNTNTNVSKQQQQPQNSTPCSSNRFLFNKSSLISQE). The segment at 746–824 (STSKNTNTNV…TNMTRQPTTL (79 aa)) is disordered. Low complexity predominate over residues 785-799 (SNGSNNNSGTQGPGS). Residues 800 to 810 (MNESYSLDNSF) show a composition bias toward polar residues. Residues 811 to 824 (NTTNTNMTRQPTTL) show a composition bias toward low complexity. Ser-856 and Ser-898 each carry phosphoserine.

The protein belongs to the vir family. Component of the MIS (mRNA N6-methyladenosine (m6A) methylation) complex, at least composed of IME4, KAR4, MUM2, SLZ1, and VIR1. Interacts with KAR4. Interacts with SLZ1. Interacts with MUM2. Interacts with IME4.

It localises to the cytoplasm. It is found in the nucleus. The protein localises to the nucleolus. In terms of biological role, component of the MIS complex, a complex that mediates N6-methyladenosine (m6A) methylation of meiotic mRNAs and is required for initiation of meiosis, progression through the meiotic divisions and sporulation. In the complex, performs a scaffolding role stabilizing the other complex members. This is Protein virilizer from Saccharomyces cerevisiae (strain ATCC 204508 / S288c) (Baker's yeast).